The chain runs to 196 residues: Indolepyruvate oxidoreductase subunit IorB (196 aa).

In terms of assembly, heterodimer of the IorA and IorB subunits.

The enzyme catalyses indole-3-pyruvate + 2 oxidized [2Fe-2S]-[ferredoxin] + CoA = (indol-3-yl)acetyl-CoA + 2 reduced [2Fe-2S]-[ferredoxin] + CO2 + H(+). Catalyzes the ferredoxin-dependent oxidative decarboxylation of arylpyruvates. This Methanothermobacter thermautotrophicus (strain ATCC 29096 / DSM 1053 / JCM 10044 / NBRC 100330 / Delta H) (Methanobacterium thermoautotrophicum) protein is Indolepyruvate oxidoreductase subunit IorB (iorB).